We begin with the raw amino-acid sequence, 232 residues long: dTTP/UTP pyrophosphatase (232 aa).

Residue aspartate 103 is the Proton acceptor of the active site.

Belongs to the Maf family. YhdE subfamily. It depends on a divalent metal cation as a cofactor.

It localises to the cytoplasm. The enzyme catalyses dTTP + H2O = dTMP + diphosphate + H(+). It carries out the reaction UTP + H2O = UMP + diphosphate + H(+). Nucleoside triphosphate pyrophosphatase that hydrolyzes dTTP and UTP. May have a dual role in cell division arrest and in preventing the incorporation of modified nucleotides into cellular nucleic acids. The protein is dTTP/UTP pyrophosphatase of Bartonella henselae (strain ATCC 49882 / DSM 28221 / CCUG 30454 / Houston 1) (Rochalimaea henselae).